The sequence spans 953 residues: Communesin biosynthesis cluster-specific transcription factor cnsN (953 aa).

The segment at 371–418 is disordered; sequence ELESTSPRTSHSSLSQDDTASLHSRSSLSSSPGRFPPSQKLVATSDSP. Residues 374-408 are compositionally biased toward low complexity; that stretch reads STSPRTSHSSLSQDDTASLHSRSSLSSSPGRFPPS.

The protein localises to the nucleus. In terms of biological role, transcriptional regulator; part of the gene cluster that mediates the biosynthesis of communesins, a prominent class of indole alkaloids with great potential as pharmaceuticals. This is Communesin biosynthesis cluster-specific transcription factor cnsN from Penicillium expansum (Blue mold rot fungus).